A 352-amino-acid polypeptide reads, in one-letter code: Histidine biosynthesis bifunctional protein HisB (352 aa).

Residues 1-164 (MSQKILFIDR…EIENEILSSF (164 aa)) are histidinol-phosphatase. Residue D9 is the Nucleophile of the active site. Mg(2+) contacts are provided by D9 and D11. The active-site Proton donor is the D11. Zn(2+)-binding residues include C93, H95, C101, and C103. D130 provides a ligand contact to Mg(2+). Positions 165–352 (RSASYQRTTK…ENLASSKGVI (188 aa)) are imidazoleglycerol-phosphate dehydratase.

It in the N-terminal section; belongs to the histidinol-phosphatase family. This sequence in the C-terminal section; belongs to the imidazoleglycerol-phosphate dehydratase family. The cofactor is Mg(2+). It depends on Zn(2+) as a cofactor.

Its subcellular location is the cytoplasm. It carries out the reaction D-erythro-1-(imidazol-4-yl)glycerol 3-phosphate = 3-(imidazol-4-yl)-2-oxopropyl phosphate + H2O. The enzyme catalyses L-histidinol phosphate + H2O = L-histidinol + phosphate. Its pathway is amino-acid biosynthesis; L-histidine biosynthesis; L-histidine from 5-phospho-alpha-D-ribose 1-diphosphate: step 6/9. It participates in amino-acid biosynthesis; L-histidine biosynthesis; L-histidine from 5-phospho-alpha-D-ribose 1-diphosphate: step 8/9. The chain is Histidine biosynthesis bifunctional protein HisB from Campylobacter jejuni subsp. doylei (strain ATCC BAA-1458 / RM4099 / 269.97).